A 335-amino-acid polypeptide reads, in one-letter code: Serpentine receptor class alpha-25 (335 aa).

A run of 5 helical transmembrane segments spans residues 22–42 (IPVK…FYFA), 151–171 (LLII…YGVP), 195–215 (FRTV…YLSV), 245–265 (CILI…VNYI), and 280–300 (LAPF…VIYF).

It belongs to the nematode receptor-like protein sra family.

The protein localises to the membrane. The protein is Serpentine receptor class alpha-25 (sra-25) of Caenorhabditis elegans.